A 354-amino-acid chain; its full sequence is UDP-N-acetylglucosamine--N-acetylmuramyl-(pentapeptide) pyrophosphoryl-undecaprenol N-acetylglucosamine transferase (354 aa).

Residues 15 to 17 (TGG), Asn127, Arg163, Ser191, Ile244, 263 to 268 (ALTVSE), and Gln288 contribute to the UDP-N-acetyl-alpha-D-glucosamine site.

It belongs to the glycosyltransferase 28 family. MurG subfamily.

It localises to the cell inner membrane. It catalyses the reaction di-trans,octa-cis-undecaprenyl diphospho-N-acetyl-alpha-D-muramoyl-L-alanyl-D-glutamyl-meso-2,6-diaminopimeloyl-D-alanyl-D-alanine + UDP-N-acetyl-alpha-D-glucosamine = di-trans,octa-cis-undecaprenyl diphospho-[N-acetyl-alpha-D-glucosaminyl-(1-&gt;4)]-N-acetyl-alpha-D-muramoyl-L-alanyl-D-glutamyl-meso-2,6-diaminopimeloyl-D-alanyl-D-alanine + UDP + H(+). It functions in the pathway cell wall biogenesis; peptidoglycan biosynthesis. Functionally, cell wall formation. Catalyzes the transfer of a GlcNAc subunit on undecaprenyl-pyrophosphoryl-MurNAc-pentapeptide (lipid intermediate I) to form undecaprenyl-pyrophosphoryl-MurNAc-(pentapeptide)GlcNAc (lipid intermediate II). The sequence is that of UDP-N-acetylglucosamine--N-acetylmuramyl-(pentapeptide) pyrophosphoryl-undecaprenol N-acetylglucosamine transferase from Aliivibrio fischeri (strain MJ11) (Vibrio fischeri).